Reading from the N-terminus, the 189-residue chain is Probable nicotinate-nucleotide adenylyltransferase (189 aa).

This sequence belongs to the NadD family.

It carries out the reaction nicotinate beta-D-ribonucleotide + ATP + H(+) = deamido-NAD(+) + diphosphate. The protein operates within cofactor biosynthesis; NAD(+) biosynthesis; deamido-NAD(+) from nicotinate D-ribonucleotide: step 1/1. Its function is as follows. Catalyzes the reversible adenylation of nicotinate mononucleotide (NaMN) to nicotinic acid adenine dinucleotide (NaAD). In Caulobacter sp. (strain K31), this protein is Probable nicotinate-nucleotide adenylyltransferase.